Reading from the N-terminus, the 564-residue chain is Rhotekin (564 aa).

The residue at position 14 (Arg14) is an Omega-N-methylarginine. The REM-1 domain occupies 17-98; that stretch reads ALEMEFKRGR…LQRRKEAQVL (82 aa). Phosphoserine is present on residues Ser30 and Ser106. Residue Arg230 is modified to Asymmetric dimethylarginine. At Ser232 the chain carries Phosphoserine. The 108-residue stretch at 309–416 folds into the PH domain; the sequence is QPTASGALRV…WMEALWQLFF (108 aa). Positions 518–564 are disordered; the sequence is TFSLDAAPADHSLGPSRSVAPLPPQRSPKSRGFYSKSQLGPWLQSPV. A phosphoserine mark is found at Ser520, Ser529, and Ser544.

As to quaternary structure, interacts via its C-terminal region with the TAX1BP3 PDZ domain. This interaction facilitates Rho-mediated activation of the c-Fos serum response element (SRE). Interacts with SEPT9. Specifically binds to GTP-bound RHOA, RHOB and RHOC and inhibits their GTPase activity. In terms of tissue distribution, abundantly expressed in brain and kidney. Weakly expressed in lung, testis, skeletal muscle, heart and thymus.

In terms of biological role, mediates Rho signaling to activate NF-kappa-B and may confer increased resistance to apoptosis to cells in gastric tumorigenesis. May play a novel role in the organization of septin structures. The chain is Rhotekin from Mus musculus (Mouse).